We begin with the raw amino-acid sequence, 559 residues long: Phosphatase and actin regulator 3 (559 aa).

Residues 1–65 (MAASEDGSGC…GIRTPPVRRN (65 aa)) are disordered. Residues 15-24 (GRSQSDPSVL) are compositionally biased toward polar residues. Positions 25–35 (TDSSATSSADA) are enriched in low complexity. At Thr70 the chain carries Phosphothreonine. The disordered stretch occupies residues 82–342 (KKKNEKLKQT…VERGKEREEA (261 aa)). One copy of the RPEL 1 repeat lies at 93–118 (SALEKKMAGRQGREELIKKGLLEMME). The segment covering 95–113 (LEKKMAGRQGREELIKKGL) has biased composition (basic and acidic residues). Polar residues predominate over residues 134–151 (SVQSEPPTPKSETLTSED). Pro residues predominate over residues 229–240 (PSPPLLPTPPPK). At Ser230 the chain carries Phosphoserine. Thr236 bears the Phosphothreonine mark. Composition is skewed to polar residues over residues 248–262 (NVTG…SSMK) and 270–281 (GQLSTPTGSPHL). The span at 293 to 342 (VIEELHRALATKHRQDSFQGRESKGSPKKRLDVRLSRTSSVERGKEREEA) shows a compositional bias: basic and acidic residues. Positions 346–369 (DGALENKRTAAKESEENKENLIIN) form a coiled coil. RPEL repeat units follow at residues 401–426 (ELLA…PRRT), 439–464 (MKLS…KQRN), and 477–502 (QRLT…IRFS). A required for PP1CA binding and inhibition of PP1 activity region spans residues 438 to 518 (EMKLSKRLSQ…KAQDYDRRAD (81 aa)). A coiled-coil region spans residues 450–486 (AVEELERRNILKQRNDQTEQEERREIKQRLTRKLNQR).

It belongs to the phosphatase and actin regulator family. As to quaternary structure, binds actin and PPP1CA; thus inhibiting the protein phosphatase 1 (PP1) activity. As to expression, abundantly expressed in brain. Also found in several tumors such as lung carcinomas, nervous tumors and HL-60 leukemia cells. Isoform 3 is the major form in U-937, GOTO and HL-60 leukemia cells.

It localises to the nucleus matrix. This chain is Phosphatase and actin regulator 3 (PHACTR3), found in Homo sapiens (Human).